We begin with the raw amino-acid sequence, 748 residues long: ATP-dependent RNA helicase DRS1 (748 aa).

2 disordered regions span residues 1 to 72 (MAVK…PEFQ) and 111 to 211 (RKGG…EDTK). Acidic residues predominate over residues 18–32 (DSEEDVPDLDASDDE). A compositionally biased stretch (basic residues) spans 38–52 (VKSSKTKNKSKKKAK). The span at 58–67 (HLDEDVHEDL) shows a compositional bias: basic and acidic residues. Acidic residues-rich tracts occupy residues 124 to 153 (DAEE…DELA), 168 to 185 (ENEE…DEDD), and 202 to 211 (EDEDIEEDTK). Positions 233-261 (KTFNSLSLSRPVLKGLGSLGYTSPSPIQS) match the Q motif motif. Residues 264 to 439 (IPIALLGKDI…SLSLKKPVRI (176 aa)) enclose the Helicase ATP-binding domain. 277–284 (AVTGSGKT) is an ATP binding site. Positions 387-390 (DEAD) match the DEAD box motif. Positions 468 to 628 (LLYQLIRKLD…TQVEQVNSLI (161 aa)) constitute a Helicase C-terminal domain. Residues 632-667 (GDVVEEIIEEEKQEKEILRAEMELRKGENMLKHKEE) are a coiled coil. Residues 687 to 748 (KMLQVLAKNK…YGKKGKKGKK (62 aa)) are disordered. The span at 694 to 705 (KNKKPINSKKRK) shows a compositional bias: basic residues. Over residues 720 to 732 (TQKDRVEYQERQY) the composition is skewed to basic and acidic residues.

It belongs to the DEAD box helicase family. DDX27/DRS1 subfamily. As to quaternary structure, associates with pre-ribosomal particles.

The protein resides in the nucleus. It is found in the nucleolus. It catalyses the reaction ATP + H2O = ADP + phosphate + H(+). Functionally, ATP-binding RNA helicase involved in ribosome assembly. The sequence is that of ATP-dependent RNA helicase DRS1 (DRS1) from Kluyveromyces lactis (strain ATCC 8585 / CBS 2359 / DSM 70799 / NBRC 1267 / NRRL Y-1140 / WM37) (Yeast).